A 208-amino-acid polypeptide reads, in one-letter code: Outer-membrane lipoprotein carrier protein (208 aa).

An N-terminal signal peptide occupies residues 1 to 22; sequence MLKPLSQLVCALPLVVAASSYA.

The protein belongs to the LolA family. As to quaternary structure, monomer.

It is found in the periplasm. Functionally, participates in the translocation of lipoproteins from the inner membrane to the outer membrane. Only forms a complex with a lipoprotein if the residue after the N-terminal Cys is not an aspartate (The Asp acts as a targeting signal to indicate that the lipoprotein should stay in the inner membrane). This Shewanella loihica (strain ATCC BAA-1088 / PV-4) protein is Outer-membrane lipoprotein carrier protein.